Consider the following 937-residue polypeptide: Leucine--tRNA ligase (937 aa).

Residues 34 to 44 carry the 'HIGH' region motif; sequence PYPSGAMHIGH. The 'KMSKS' region signature appears at 609–613; the sequence is KMSSS.

The protein belongs to the class-I aminoacyl-tRNA synthetase family.

The protein localises to the cytoplasm. It catalyses the reaction tRNA(Leu) + L-leucine + ATP = L-leucyl-tRNA(Leu) + AMP + diphosphate. This chain is Leucine--tRNA ligase, found in Methanothermobacter thermautotrophicus (strain ATCC 29096 / DSM 1053 / JCM 10044 / NBRC 100330 / Delta H) (Methanobacterium thermoautotrophicum).